Reading from the N-terminus, the 198-residue chain is 7-methyl-GTP pyrophosphatase (198 aa).

Catalysis depends on D69, which acts as the Proton acceptor.

This sequence belongs to the Maf family. YceF subfamily. Requires a divalent metal cation as cofactor.

Its subcellular location is the cytoplasm. It catalyses the reaction N(7)-methyl-GTP + H2O = N(7)-methyl-GMP + diphosphate + H(+). Nucleoside triphosphate pyrophosphatase that hydrolyzes 7-methyl-GTP (m(7)GTP). May have a dual role in cell division arrest and in preventing the incorporation of modified nucleotides into cellular nucleic acids. This is 7-methyl-GTP pyrophosphatase from Yersinia pestis bv. Antiqua (strain Antiqua).